The sequence spans 465 residues: UDP-N-acetylmuramoylalanine--D-glutamate ligase (465 aa).

Position 127–133 (127–133) interacts with ATP; the sequence is GSNGKST.

It belongs to the MurCDEF family.

Its subcellular location is the cytoplasm. It carries out the reaction UDP-N-acetyl-alpha-D-muramoyl-L-alanine + D-glutamate + ATP = UDP-N-acetyl-alpha-D-muramoyl-L-alanyl-D-glutamate + ADP + phosphate + H(+). It participates in cell wall biogenesis; peptidoglycan biosynthesis. Cell wall formation. Catalyzes the addition of glutamate to the nucleotide precursor UDP-N-acetylmuramoyl-L-alanine (UMA). The sequence is that of UDP-N-acetylmuramoylalanine--D-glutamate ligase from Cereibacter sphaeroides (strain ATCC 17029 / ATH 2.4.9) (Rhodobacter sphaeroides).